Reading from the N-terminus, the 299-residue chain is 4-hydroxybenzoate octaprenyltransferase (299 aa).

8 consecutive transmembrane segments (helical) span residues 33–53 (VGFLLLLWPTWWALWLAADGV), 56–76 (WWTLCVFTTGIWLTRSAGCVI), 105–125 (NALLMFGTLMLIAFGLVLTMN), 151–171 (LPQVYLGIAFGWGIPMAFAAI), 180–200 (WLLYVANILWTTAYDTWYAMV), 214–234 (AILFADLDLVVQGVLYTLMLL), 247–267 (HTYWISLISAVALIGYQFIIA), and 278–298 (AFMHNNWVGMTIFAGIALATT).

This sequence belongs to the UbiA prenyltransferase family. Mg(2+) serves as cofactor.

The protein resides in the cell inner membrane. It carries out the reaction all-trans-octaprenyl diphosphate + 4-hydroxybenzoate = 4-hydroxy-3-(all-trans-octaprenyl)benzoate + diphosphate. The protein operates within cofactor biosynthesis; ubiquinone biosynthesis. Functionally, catalyzes the prenylation of para-hydroxybenzoate (PHB) with an all-trans polyprenyl group. Mediates the second step in the final reaction sequence of ubiquinone-8 (UQ-8) biosynthesis, which is the condensation of the polyisoprenoid side chain with PHB, generating the first membrane-bound Q intermediate 3-octaprenyl-4-hydroxybenzoate. The sequence is that of 4-hydroxybenzoate octaprenyltransferase from Xylella fastidiosa (strain M23).